The sequence spans 434 residues: Transcription elongation factor B polypeptide 3 (434 aa).

Residues 142-161 (KPEPVDVHEQQASSSSMSYQ) form a disordered region. Over residues 151–160 (QQASSSSMSY) the composition is skewed to polar residues. The interval 221-230 (TLVSLCQTVL) is BC box. In terms of domain architecture, F-box spans 237-281 (IDHVGIVPFDLLKPVLDHASTDQLRHILDVNPMLVEDADEMFHEM). The interval 391–415 (ITPRGGGVPSTSRSRSNNNNNMNNG) is disordered.

Heterotrimer of an A, B and C subunit.

The protein resides in the nucleus. Its function is as follows. SIII, also known as elongin, is a general transcription elongation factor that increases the RNA polymerase II transcription elongation past template-encoded arresting sites. Subunit A is transcriptionally active and its transcription activity is strongly enhanced by binding to the dimeric complex of the SIII regulatory subunits B and C (elongin BC complex). This chain is Transcription elongation factor B polypeptide 3, found in Caenorhabditis elegans.